A 1197-amino-acid chain; its full sequence is Protein timeless homolog (1197 aa).

The required for homodimerization and for interaction with CRY1 and CHEK1 stretch occupies residues 1–309; the sequence is MDLYMMNCEL…GLHNLQNYSS (309 aa). At serine 281 the chain carries Phosphoserine. Disordered regions lie at residues 647–674 and 943–1002; these read STPL…EELQ and RKKL…SAEN. Residues 656–673 are compositionally biased toward acidic residues; the sequence is PEEGDAEEEEEEEEEEEL. The interval 810–949 is DNA-binding domain; sequence SHRAPLWSPE…KKRRKKLAPS (140 aa). Residues 963–985 show a composition bias toward acidic residues; sequence QEDPEEEDEHLPEDESEDEESEE. Residues 986 to 999 show a composition bias toward low complexity; the sequence is GLPSGQGQGSSSLS. Residues 997 to 1095 form an interaction with PARP1 region; that stretch reads SLSAENLGES…TQLRRVAASL (99 aa). Phosphoserine occurs at positions 1071 and 1084. Residues 1079–1197 are required for nuclear localization; that stretch reads IPAKLSSTQL…KRFQIEDEDD (119 aa). A Phosphothreonine modification is found at threonine 1086. Positions 1088 to 1197 are disordered; it reads LRRVAASLSQ…KRFQIEDEDD (110 aa). 2 stretches are compositionally biased toward acidic residues: residues 1099–1109 and 1143–1153; these read ENEEEREEEPE and TEEEATGEEEW. Phosphoserine is present on serine 1165.

The protein belongs to the timeless family. In terms of assembly, monomer. Homodimer or homomultimer. Component of the circadian core oscillator, which includes the CRY proteins, CLOCK or NPAS2, ARTNL/BMAL1 or ARTNL2/BMAL2, CSKN1D and/or CSNK1E, TIMELESS, and the PER proteins. Interacts directly with PER2; the interaction with PER2 is via its second PAS domain. Interacts directly with PER1 and PER3. Interacts with CRY1. Interacts with CRY2. Interacts with CHEK1, ATR and ATRIP. Interacts with CLSPN. Interacts (via N-terminus) with TIPIN. The TIMELESS-TIPIN heterodimer binds preferably to guanine-rich quadruplex-forming (G4) DNA structures. Associates with the MCM2-7 complex. Interacts with DNA polymerases alpha, delta and epsilon. Interacts with DDX11; this interaction increases recruitment of both proteins onto chromatin in response to replication stress induction by hydroxyurea. Interacts with PARP1; interaction is direct and independent of poly-ADP-ribose. As to expression, predominantly and robustly expressed in proliferative organs (spleen, thymus, intestine and testis) compared to those more differentiated such as kidney and liver (at protein level). Expressed in all tissues examined including brain, heart, lung, liver, skeletal muscle, kidney, placenta, pancreas, spleen, thymus and testis. Strongly expressed in the suprachiasmatic nucleus (SCN) and pars tuberalis, moderately in the cingulate cortex, pyrimidal cell layer of the piriform cortex, periventricular part of the caudate putamen, and granular layer of the cerebellum, and weakly in the cerebral cortex, gyrus dentatus, hippocampus and thalamic nuclei. In embryonic kidney, expression is highest in regions of active ureteric bud cell branching.

The protein localises to the nucleus. Its subcellular location is the chromosome. In terms of biological role, plays an important role in the control of DNA replication, maintenance of replication fork stability, maintenance of genome stability throughout normal DNA replication, DNA repair and in the regulation of the circadian clock. Required to stabilize replication forks during DNA replication by forming a complex with TIPIN: this complex regulates DNA replication processes under both normal and stress conditions, stabilizes replication forks and influences both CHEK1 phosphorylation and the intra-S phase checkpoint in response to genotoxic stress. During DNA replication, inhibits the CMG complex ATPase activity and activates DNA polymerases catalytic activities, coupling DNA unwinding and DNA synthesis. TIMELESS promotes TIPIN nuclear localization. Plays a role in maintaining processive DNA replication past genomic guanine-rich DNA sequences that form G-quadruplex (G4) structures, possibly together with DDX1. Involved in cell survival after DNA damage or replication stress by promoting DNA repair. In response to double-strand breaks (DSBs), accumulates at DNA damage sites and promotes homologous recombination repair via its interaction with PARP1. May be specifically required for the ATR-CHEK1 pathway in the replication checkpoint induced by hydroxyurea or ultraviolet light. Involved in the determination of period length and in the DNA damage-dependent phase advancing of the circadian clock. Negatively regulates CLOCK|NPAS2-ARTNL/BMAL1|ARTNL2/BMAL2-induced transactivation of PER1 possibly via translocation of PER1 into the nucleus. May also play an important role in epithelial cell morphogenesis and formation of branching tubules. In Mus musculus (Mouse), this protein is Protein timeless homolog.